We begin with the raw amino-acid sequence, 354 residues long: Serum paraoxonase/arylesterase 2 (354 aa).

A disulfide bridge connects residues cysteine 42 and cysteine 352. The Ca(2+) site is built by glutamate 53 and aspartate 54. Histidine 114 serves as the catalytic Proton acceptor. Ca(2+) contacts are provided by isoleucine 116, asparagine 167, aspartate 168, and asparagine 223. Residue asparagine 254 is glycosylated (N-linked (GlcNAc...) asparagine). 2 residues coordinate Ca(2+): aspartate 268 and asparagine 269. Asparagine 269 and asparagine 323 each carry an N-linked (GlcNAc...) asparagine glycan.

It belongs to the paraoxonase family. Homotrimer. It depends on Ca(2+) as a cofactor. The signal sequence is not cleaved. Widely expressed with highest expression in liver, lung, placenta, testis and heart.

Its subcellular location is the membrane. The enzyme catalyses a phenyl acetate + H2O = a phenol + acetate + H(+). It catalyses the reaction an N-acyl-L-homoserine lactone + H2O = an N-acyl-L-homoserine + H(+). Capable of hydrolyzing lactones and a number of aromatic carboxylic acid esters. Has antioxidant activity. Is not associated with high density lipoprotein. Prevents LDL lipid peroxidation, reverses the oxidation of mildly oxidized LDL, and inhibits the ability of MM-LDL to induce monocyte chemotaxis. This is Serum paraoxonase/arylesterase 2 (PON2) from Homo sapiens (Human).